A 365-amino-acid chain; its full sequence is Protein Wnt-6 (365 aa).

Positions M1 to G24 are cleaved as a signal peptide. 11 cysteine pairs are disulfide-bonded: C76–C87, C124–C132, C134–C172, C222–C236, C224–C231, C294–C325, C310–C320, C324–C364, C340–C355, C342–C352, and C347–C348. N86 carries an N-linked (GlcNAc...) asparagine glycan. Residues R140–A158 are compositionally biased toward pro residues. The disordered stretch occupies residues R140–S164. S228 carries O-palmitoleoyl serine; by PORCN lipidation. N-linked (GlcNAc...) asparagine glycosylation occurs at N311.

Belongs to the Wnt family. Interacts with PORCN. Post-translationally, palmitoleoylation is required for efficient binding to frizzled receptors. Depalmitoleoylation leads to Wnt signaling pathway inhibition. As to expression, expressed in gastric cancer cell lines and gastric cancer tissues (at protein level). Detected in the apical gland region of the gastric foveolar epithelium (at protein level).

It localises to the secreted. Its subcellular location is the extracellular space. It is found in the extracellular matrix. Functionally, ligand for members of the frizzled family of seven transmembrane receptors. Probable developmental protein. May be a signaling molecule which affects the development of discrete regions of tissues. Is likely to signal over only few cell diameters. Together with CAV1 may promote chemoresistance of gastric cancer cells to DNA-damaging anthracycline drugs through the activation of the canonical Wnt receptor signaling pathway. This Homo sapiens (Human) protein is Protein Wnt-6 (WNT6).